Here is a 326-residue protein sequence, read N- to C-terminus: MIKDSSVQVEGQEKVCLDQWVAHYRTYAAKGRSASYIPALGEINVSQLGICIVKPDGTMIKSGDWEIPFTLQSISKVIGFIAACLSRGISYVLERVDVEPTGDAFNSIIRLEIHKPGKPFNPMINAGAITIASLLPGTSVQEKLESIYVLIEKMIEKRPAINEIVFQSEWETAHRNRALAYYLKENGFLESDVEETLEVYLKQCSIEINTEDIALIGLILAHDGYHPIRKEQVLPKEVARLTKALMLTCGMYNASGKFAAFIGLPAKSGVSGGIMTLVPSKSRKDLSFQDGCGIGIYGPAIDEYGNSLPGIMLLEHIAKEWDLSIF.

Substrate is bound by residues Ser73, Asn125, Glu169, Asn176, Tyr200, Tyr252, and Val270.

The protein belongs to the glutaminase family. As to quaternary structure, homotetramer.

It catalyses the reaction L-glutamine + H2O = L-glutamate + NH4(+). This chain is Glutaminase 2, found in Bacillus anthracis.